We begin with the raw amino-acid sequence, 324 residues long: MKPSVILYKALPDDLLQRLQEHFTVHQVANLSPQTVDQNAAIFAEAEGLLGSNENVDAALLEKMPRLRATSTISVGYDNFDVDALTARKILLMHTPTVLTETVADTLMALVLSTARRVVEVAERVKAGEWTASIGPDWYGTDVYHKTLGIVGMGRIGMALAQRAHFGFNMPILYNARRHHKEAEERFNARYCDLDTLLQESDFVCLILPLTDETYHLFGAEQFAKMKSSAIFINAGRGPVVDENALIAALQKGEIHAAGLDVFEQEPLSVDSPLLSMANVVAVPHIGSATHETRYGMAACAVDNLIDALQGKVEKNCVNPHVAD.

Active-site residues include arginine 237 and glutamate 266. Histidine 285 (proton donor) is an active-site residue.

The protein belongs to the D-isomer specific 2-hydroxyacid dehydrogenase family. GhrB subfamily. In terms of assembly, homodimer.

It is found in the cytoplasm. The catalysed reaction is glycolate + NADP(+) = glyoxylate + NADPH + H(+). The enzyme catalyses (R)-glycerate + NAD(+) = 3-hydroxypyruvate + NADH + H(+). It carries out the reaction (R)-glycerate + NADP(+) = 3-hydroxypyruvate + NADPH + H(+). Catalyzes the NADPH-dependent reduction of glyoxylate and hydroxypyruvate into glycolate and glycerate, respectively. This Shigella dysenteriae serotype 1 (strain Sd197) protein is Glyoxylate/hydroxypyruvate reductase B.